Here is a 319-residue protein sequence, read N- to C-terminus: tRNA-cytidine(32) 2-sulfurtransferase (319 aa).

The PP-loop motif motif lies at 49 to 54 (SGGKDS). [4Fe-4S] cluster-binding residues include cysteine 124, cysteine 127, and cysteine 215.

Belongs to the TtcA family. In terms of assembly, homodimer. Requires Mg(2+) as cofactor. The cofactor is [4Fe-4S] cluster.

The protein localises to the cytoplasm. The enzyme catalyses cytidine(32) in tRNA + S-sulfanyl-L-cysteinyl-[cysteine desulfurase] + AH2 + ATP = 2-thiocytidine(32) in tRNA + L-cysteinyl-[cysteine desulfurase] + A + AMP + diphosphate + H(+). The protein operates within tRNA modification. Functionally, catalyzes the ATP-dependent 2-thiolation of cytidine in position 32 of tRNA, to form 2-thiocytidine (s(2)C32). The sulfur atoms are provided by the cysteine/cysteine desulfurase (IscS) system. The sequence is that of tRNA-cytidine(32) 2-sulfurtransferase from Shewanella amazonensis (strain ATCC BAA-1098 / SB2B).